Reading from the N-terminus, the 144-residue chain is uncharacterized protein (144 aa).

The region spanning Ile2 to Leu144 is the N-acetyltransferase domain.

The protein belongs to the acetyltransferase family.

Its subcellular location is the cytoplasm. It is found in the nucleus. This is an uncharacterized protein from Schizosaccharomyces pombe (strain 972 / ATCC 24843) (Fission yeast).